The sequence spans 370 residues: Cyanuric acid amidohydrolase (370 aa).

Positions 1-103 (MQAQVFRVPM…TIFTVQKTDN (103 aa)) are RU A. Substrate contacts are provided by residues Arg-51 and 82-83 (SG). The segment at 113–250 (RLAVQQIFTR…NEIIVMGNSR (138 aa)) is RU B. Lys-163 is a catalytic residue. Substrate contacts are provided by residues Arg-195 and 233 to 234 (SA). The active-site Nucleophile is Ser-233. The interval 256–370 (LVIGHAEMKD…GPVAVIARTA (115 aa)) is RU C. Glu-303 contributes to the Mg(2+) binding site. Residues Arg-330 and 349–350 (SG) contribute to the substrate site. Residues Ser-352, Gln-355, Gly-356, Pro-357, and Gly-360 each coordinate Mg(2+).

The protein belongs to the cyclic amide hydrolase (CyAH) family. As to quaternary structure, homotetramer.

The catalysed reaction is cyanurate + H2O = 1-carboxybiuret + H(+). Its pathway is xenobiotic degradation; atrazine degradation; biuret from cyanurate: step 1/1. Its activity is regulated as follows. Inhibited by barbituric acid. In terms of biological role, responsible for the hydrolysis of cyanuric acid, an intermediate formed during catabolism of s-triazine based compounds in herbicides such as atrazine and polymers such as melamine. Catalyzes the hydrolytic opening of the s-triazine ring of cyanuric acid (2,4,6-trihydroxy-s-triazine) to yield carbon dioxide and carboxybiuret, which spontaneously decarboxylates to biuret. The polypeptide is Cyanuric acid amidohydrolase (trzD) (Pseudomonas sp).